The sequence spans 919 residues: Probable dipeptidyl-aminopeptidase B (919 aa).

A compositionally biased stretch (basic and acidic residues) spans 1-10; sequence MRRSDGHEET. The tract at residues 1–53 is disordered; the sequence is MRRSDGHEETSEFLPMTHSRSVSAASQTSTDSSLSTESLFPREQKPFPNAMGG. Over 1 to 92 the chain is Cytoplasmic; it reads MRRSDGHEET…AATGGGRARR (92 aa). A compositionally biased stretch (low complexity) spans 21–38; that stretch reads SVSAASQTSTDSSLSTES. Residues 93–113 traverse the membrane as a helical; Signal-anchor for type II membrane protein segment; sequence IFWILVLLCLGGWLLAFVLFL. The Vacuolar portion of the chain corresponds to 114–919; the sequence is TGGRANYQTA…MKRSLRLLSP (806 aa). N-linked (GlcNAc...) asparagine glycans are attached at residues asparagine 200, asparagine 352, and asparagine 643. Residue serine 757 is the Charge relay system of the active site. N-linked (GlcNAc...) asparagine glycosylation occurs at asparagine 811. Residues aspartate 834 and histidine 867 each act as charge relay system in the active site.

It belongs to the peptidase S9B family.

The protein localises to the vacuole membrane. The catalysed reaction is Release of an N-terminal dipeptide, Xaa-Yaa-|-Zaa-, from a polypeptide, preferentially when Yaa is Pro, provided Zaa is neither Pro nor hydroxyproline.. Its function is as follows. Type IV dipeptidyl-peptidase which removes N-terminal dipeptides sequentially from polypeptides having unsubstituted N-termini provided that the penultimate residue is proline. This chain is Probable dipeptidyl-aminopeptidase B (dapB), found in Aspergillus fumigatus (strain CBS 144.89 / FGSC A1163 / CEA10) (Neosartorya fumigata).